Here is a 321-residue protein sequence, read N- to C-terminus: Probable cell division protein WhiA (321 aa).

The segment at residues 276-309 (NLKELGELLEPPVGKSGVNHRLRKLEKIAEQLHQ) is a DNA-binding region (H-T-H motif).

This sequence belongs to the WhiA family.

In terms of biological role, involved in cell division and chromosome segregation. The sequence is that of Probable cell division protein WhiA from Natranaerobius thermophilus (strain ATCC BAA-1301 / DSM 18059 / JW/NM-WN-LF).